A 365-amino-acid polypeptide reads, in one-letter code: Histidinol-phosphate aminotransferase (365 aa).

Residues 1-22 (MSRPVPNPGILDIAPYTPGKSP) are disordered. Residue lysine 221 is modified to N6-(pyridoxal phosphate)lysine.

It belongs to the class-II pyridoxal-phosphate-dependent aminotransferase family. Histidinol-phosphate aminotransferase subfamily. In terms of assembly, homodimer. The cofactor is pyridoxal 5'-phosphate.

It catalyses the reaction L-histidinol phosphate + 2-oxoglutarate = 3-(imidazol-4-yl)-2-oxopropyl phosphate + L-glutamate. It functions in the pathway amino-acid biosynthesis; L-histidine biosynthesis; L-histidine from 5-phospho-alpha-D-ribose 1-diphosphate: step 7/9. In Rhodopseudomonas palustris (strain BisA53), this protein is Histidinol-phosphate aminotransferase.